We begin with the raw amino-acid sequence, 423 residues long: Enolase (423 aa).

Gln-163 contributes to the (2R)-2-phosphoglycerate binding site. Glu-205 (proton donor) is an active-site residue. Residues Asp-242, Glu-285, and Asp-312 each coordinate Mg(2+). The (2R)-2-phosphoglycerate site is built by Lys-337, Arg-366, Ser-367, and Lys-388. Catalysis depends on Lys-337, which acts as the Proton acceptor.

This sequence belongs to the enolase family. The cofactor is Mg(2+).

It localises to the cytoplasm. Its subcellular location is the secreted. The protein resides in the cell surface. It carries out the reaction (2R)-2-phosphoglycerate = phosphoenolpyruvate + H2O. Its pathway is carbohydrate degradation; glycolysis; pyruvate from D-glyceraldehyde 3-phosphate: step 4/5. Catalyzes the reversible conversion of 2-phosphoglycerate (2-PG) into phosphoenolpyruvate (PEP). It is essential for the degradation of carbohydrates via glycolysis. In Desulforapulum autotrophicum (strain ATCC 43914 / DSM 3382 / VKM B-1955 / HRM2) (Desulfobacterium autotrophicum), this protein is Enolase.